We begin with the raw amino-acid sequence, 423 residues long: Imidazolonepropionase (423 aa).

Histidine 78 and histidine 80 together coordinate Fe(3+). Zn(2+)-binding residues include histidine 78 and histidine 80. Residues arginine 87, tyrosine 150, and histidine 183 each contribute to the 4-imidazolone-5-propanoate site. Residue tyrosine 150 participates in N-formimidoyl-L-glutamate binding. Residue histidine 247 coordinates Fe(3+). Histidine 247 contributes to the Zn(2+) binding site. Glutamate 250 is a binding site for 4-imidazolone-5-propanoate. Residue aspartate 322 coordinates Fe(3+). Aspartate 322 is a binding site for Zn(2+). The N-formimidoyl-L-glutamate site is built by asparagine 324 and glycine 326. 4-imidazolone-5-propanoate is bound at residue serine 327.

Belongs to the metallo-dependent hydrolases superfamily. HutI family. It depends on Zn(2+) as a cofactor. Requires Fe(3+) as cofactor.

The protein resides in the cytoplasm. The enzyme catalyses 4-imidazolone-5-propanoate + H2O = N-formimidoyl-L-glutamate. The protein operates within amino-acid degradation; L-histidine degradation into L-glutamate; N-formimidoyl-L-glutamate from L-histidine: step 3/3. Functionally, catalyzes the hydrolytic cleavage of the carbon-nitrogen bond in imidazolone-5-propanoate to yield N-formimidoyl-L-glutamate. It is the third step in the universal histidine degradation pathway. The sequence is that of Imidazolonepropionase from Bacillus cereus (strain ZK / E33L).